The primary structure comprises 692 residues: Translation initiation factor IF-2 (692 aa).

The disordered stretch occupies residues 51-114; that stretch reads KAKPENAKKG…KPAETPGKIT (64 aa). Residues 59-84 show a composition bias toward low complexity; the sequence is KGQNQKQSNNQQQNRQKQNQKNQSKP. Positions 85 to 94 are enriched in basic residues; the sequence is NKNKKQKGPK. In terms of domain architecture, tr-type G spans 193–362; that stretch reads ERPAVVTIMG…LLVSEVEELK (170 aa). A G1 region spans residues 202 to 209; it reads GHVDHGKT. GTP is bound at residue 202–209; the sequence is GHVDHGKT. Positions 227–231 are G2; it reads GITQH. The segment at 248–251 is G3; the sequence is DTPG. GTP-binding positions include 248-252 and 302-305; these read DTPGH and NKMD. Residues 302-305 are G4; it reads NKMD. The segment at 338-340 is G5; that stretch reads SAI.

This sequence belongs to the TRAFAC class translation factor GTPase superfamily. Classic translation factor GTPase family. IF-2 subfamily.

The protein resides in the cytoplasm. Functionally, one of the essential components for the initiation of protein synthesis. Protects formylmethionyl-tRNA from spontaneous hydrolysis and promotes its binding to the 30S ribosomal subunits. Also involved in the hydrolysis of GTP during the formation of the 70S ribosomal complex. In Oceanobacillus iheyensis (strain DSM 14371 / CIP 107618 / JCM 11309 / KCTC 3954 / HTE831), this protein is Translation initiation factor IF-2.